A 568-amino-acid polypeptide reads, in one-letter code: Nucleoprotein (568 aa).

The segment at 54–240 (MRKEKRDDSD…IDGNKSAINI (187 aa)) is binding site for the cap structure m7GTP. 2 residues coordinate Mn(2+): Asp388 and Glu390. Zn(2+) is bound by residues Glu398, Cys505, His508, and Cys528. Mn(2+) is bound at residue Asp532.

This sequence belongs to the arenaviridae nucleocapsid protein family. In terms of assembly, homomultimerizes to form the nucleocapsid. Binds to viral genomic RNA. Interacts with glycoprotein G2. Interacts with protein Z; this interaction probably directs the encapsidated genome to budding sites. Interacts with protein L; this interaction does not interfere with Z-L interaction. Interacts with host IKBKE (via Protein kinase domain); the interaction inhibits IKBKE kinase activity.

The protein localises to the virion. It is found in the host cytoplasm. Its function is as follows. Encapsidates the genome, protecting it from nucleases. The encapsidated genomic RNA is termed the nucleocapsid (NC). Serves as template for viral transcription and replication. The increased presence of protein N in host cell does not seem to trigger the switch from transcription to replication as observed in other negative strain RNA viruses. Through the interaction with host IKBKE, strongly inhibits the phosphorylation and nuclear translocation of host IRF3, a protein involved in interferon activation pathway, leading to the inhibition of interferon-beta and IRF3-dependent promoters activation. Also encodes a functional 3'-5' exoribonuclease that degrades preferentially dsRNA substrates and thereby participates in the suppression of interferon induction. The polypeptide is Nucleoprotein (Praomys (African soft-furred rats)).